The following is a 122-amino-acid chain: Large ribosomal subunit protein bL12 (122 aa).

This sequence belongs to the bacterial ribosomal protein bL12 family. In terms of assembly, homodimer. Part of the ribosomal stalk of the 50S ribosomal subunit. Forms a multimeric L10(L12)X complex, where L10 forms an elongated spine to which 2 to 4 L12 dimers bind in a sequential fashion. Binds GTP-bound translation factors.

Its function is as follows. Forms part of the ribosomal stalk which helps the ribosome interact with GTP-bound translation factors. Is thus essential for accurate translation. In Sodalis glossinidius (strain morsitans), this protein is Large ribosomal subunit protein bL12.